A 159-amino-acid chain; its full sequence is 2-C-methyl-D-erythritol 2,4-cyclodiphosphate synthase (159 aa).

A divalent metal cation is bound by residues Asp8 and His10. Residues 8–10 and 34–35 contribute to the 4-CDP-2-C-methyl-D-erythritol 2-phosphate site; these read DVH and HS. A divalent metal cation is bound at residue His42. Residues 56 to 58, 61 to 65, 132 to 135, Phe139, and Arg142 contribute to the 4-CDP-2-C-methyl-D-erythritol 2-phosphate site; these read DIG, FPDTD, and TTTE.

The protein belongs to the IspF family. In terms of assembly, homotrimer. A divalent metal cation is required as a cofactor.

It carries out the reaction 4-CDP-2-C-methyl-D-erythritol 2-phosphate = 2-C-methyl-D-erythritol 2,4-cyclic diphosphate + CMP. It functions in the pathway isoprenoid biosynthesis; isopentenyl diphosphate biosynthesis via DXP pathway; isopentenyl diphosphate from 1-deoxy-D-xylulose 5-phosphate: step 4/6. In terms of biological role, involved in the biosynthesis of isopentenyl diphosphate (IPP) and dimethylallyl diphosphate (DMAPP), two major building blocks of isoprenoid compounds. Catalyzes the conversion of 4-diphosphocytidyl-2-C-methyl-D-erythritol 2-phosphate (CDP-ME2P) to 2-C-methyl-D-erythritol 2,4-cyclodiphosphate (ME-CPP) with a corresponding release of cytidine 5-monophosphate (CMP). The polypeptide is 2-C-methyl-D-erythritol 2,4-cyclodiphosphate synthase (Finegoldia magna (strain ATCC 29328 / DSM 20472 / WAL 2508) (Peptostreptococcus magnus)).